Consider the following 687-residue polypeptide: Chloride channel protein ClC-Kb (687 aa).

The Cytoplasmic portion of the chain corresponds to 1–50; sequence MEEIVGLREGSPRKPVPLQELWRPCPRIRRNIQGSLEWLKERLFRVGEDW. Transmembrane regions (helical) follow at residues 51 to 82 and 91 to 111; these read YFLV…KWLY and LRYL…SGFS. The segment at residues 116 to 127 is an intramembrane region (helical); the sequence is PSSGGSGIPEVK. Serine 121 contacts chloride. 2 helical membrane-spanning segments follow: residues 141-160 and 161-180; these read IKNF…TGST and IFLG…AAYL. Residue asparagine 193 is glycosylated (N-linked (GlcNAc...) asparagine). The segment at residues 203–224 is an intramembrane region (helical); sequence AGAAVGVATVFAAPISGVLFSI. A helical membrane pass occupies residues 236–255; that stretch reads YWRGFFAATCGAFMFHLLAV. 4 residues coordinate Ca(2+): glutamate 259, glutamate 261, aspartate 278, and glutamate 281. A run of 2 helical transmembrane segments spans residues 282-310 and 325-342; these read IFFF…LFFL and PLYS…TYPP. The segment at residues 349 to 360 is an intramembrane region (helical); that stretch reads ASRLSMSEYLET. Transmembrane regions (helical) follow at residues 400–420 and 421–440; these read GTLV…TTIP and IPAG…GRLF. A chloride-binding site is contributed by phenylalanine 426. Positions 464–496 form an intramembrane region, helical; the sequence is GAYALAGAAAFSGAVTHTLSTALLAFEVSGQIV. Residues 500-520 form a helical membrane-spanning segment; it reads PVLMAVLAANAICQSYQPSFY. Residues 521 to 687 are Cytoplasmic-facing; the sequence is DGTIIVKKLP…STLTNPPAPK (167 aa). CBS domains lie at 551 to 609 and 626 to 687; these read MNCT…DSAS and CPTQ…PAPK.

The protein belongs to the chloride channel (TC 2.A.49) family. CLCNKB subfamily. Homodimer. Interacts with BSND. N-glycosylated. Expressed predominantly in the kidney. Expressed in all segments of the nephron examined, including the S2 segment and the glomerulus.

The protein resides in the basolateral cell membrane. The catalysed reaction is chloride(in) = chloride(out). It carries out the reaction iodide(out) = iodide(in). The enzyme catalyses nitrate(in) = nitrate(out). It catalyses the reaction bromide(in) = bromide(out). Anion-selective channel permeable to small monovalent anions with ion selectivity for chloride &gt; bromide &gt; nitrate &gt; iodide. Forms a homodimeric channel where each subunit has its own ion conduction pathway. May conduct double-barreled currents controlled by two types of gates, two fast gates that control each subunit independently and a slow common gate that opens and shuts off both subunits simultaneously. Assembles with the regulatory subunit BSND/Barttin for sorting at the basolateral plasma membrane domain and functional switch to the ion conducting state. CLCNKB:BSND channels display mostly a linear current-voltage relationship controlled by common gate. Mediates chloride conductance along nephron segments, namely the thick ascending limb of Henle's loop, convoluted tubule and the collecting duct, contributing to the maintenance of systemic acid-base and electrolyte homeostasis. Conducts chloride currents in the stria vascularis of the inner ear to establish the endocochlear potential necessary for normal hearing. The protein is Chloride channel protein ClC-Kb of Rattus norvegicus (Rat).